Here is a 210-residue protein sequence, read N- to C-terminus: Glutathione S-transferase P 1 (210 aa).

The GST N-terminal domain occupies 1–80; it reads PEYTIIYFNA…LLARNHDLYG (80 aa). Glutathione contacts are provided by residues Tyr-7, Arg-13, Trp-38, Lys-44, 51–52, and 64–65; these read QL and QS. A GST C-terminal domain is found at 82–203; sequence NPREASLIDM…SSDAHKKRPI (122 aa).

The protein belongs to the GST superfamily. Pi family. In terms of assembly, homodimer.

The protein resides in the cytoplasm. It is found in the mitochondrion. Its subcellular location is the nucleus. It catalyses the reaction RX + glutathione = an S-substituted glutathione + a halide anion + H(+). Its function is as follows. Conjugation of reduced glutathione to a wide number of exogenous and endogenous hydrophobic electrophiles. In Bufo bufo (European toad), this protein is Glutathione S-transferase P 1.